A 404-amino-acid polypeptide reads, in one-letter code: Cysteine desulfurase IscS (404 aa).

Pyridoxal 5'-phosphate contacts are provided by residues Ala75–Thr76, Asn155, Gln183, and Ser203–His205. An N6-(pyridoxal phosphate)lysine modification is found at Lys206. Thr243 contributes to the pyridoxal 5'-phosphate binding site. The active-site Cysteine persulfide intermediate is Cys328. Residue Cys328 coordinates [2Fe-2S] cluster.

Belongs to the class-V pyridoxal-phosphate-dependent aminotransferase family. NifS/IscS subfamily. In terms of assembly, homodimer. Forms a heterotetramer with IscU, interacts with other sulfur acceptors. Pyridoxal 5'-phosphate serves as cofactor.

It is found in the cytoplasm. The catalysed reaction is (sulfur carrier)-H + L-cysteine = (sulfur carrier)-SH + L-alanine. The protein operates within cofactor biosynthesis; iron-sulfur cluster biosynthesis. Its function is as follows. Master enzyme that delivers sulfur to a number of partners involved in Fe-S cluster assembly, tRNA modification or cofactor biosynthesis. Catalyzes the removal of elemental sulfur atoms from cysteine to produce alanine. Functions as a sulfur delivery protein for Fe-S cluster synthesis onto IscU, an Fe-S scaffold assembly protein, as well as other S acceptor proteins. The sequence is that of Cysteine desulfurase IscS from Vibrio atlanticus (strain LGP32) (Vibrio splendidus (strain Mel32)).